The following is an 846-amino-acid chain: Translation initiation factor IF-2 (846 aa).

A disordered region spans residues 198-219 (YKREEEEKKSKAKKAGGKGFKK). Residues 207–219 (SKAKKAGGKGFKK) are compositionally biased toward basic residues. Positions 345-512 (SRAPVVTIMG…AVLLQSEVLE (168 aa)) constitute a tr-type G domain. The G1 stretch occupies residues 354-361 (GHVDHGKT). 354–361 (GHVDHGKT) is a binding site for GTP. The segment at 379–383 (GITQH) is G2. Residues 400-403 (DTPG) are G3. Residues 400–404 (DTPGH) and 454–457 (NKID) each bind GTP. The tract at residues 454–457 (NKID) is G4. Residues 490–492 (SAK) form a G5 region.

The protein belongs to the TRAFAC class translation factor GTPase superfamily. Classic translation factor GTPase family. IF-2 subfamily.

The protein localises to the cytoplasm. Functionally, one of the essential components for the initiation of protein synthesis. Protects formylmethionyl-tRNA from spontaneous hydrolysis and promotes its binding to the 30S ribosomal subunits. Also involved in the hydrolysis of GTP during the formation of the 70S ribosomal complex. This is Translation initiation factor IF-2 from Francisella tularensis subsp. holarctica (strain OSU18).